The following is a 137-amino-acid chain: Putative pre-16S rRNA nuclease (137 aa).

This sequence belongs to the YqgF nuclease family.

The protein resides in the cytoplasm. Could be a nuclease involved in processing of the 5'-end of pre-16S rRNA. In Desulforamulus reducens (strain ATCC BAA-1160 / DSM 100696 / MI-1) (Desulfotomaculum reducens), this protein is Putative pre-16S rRNA nuclease.